Here is a 290-residue protein sequence, read N- to C-terminus: Transcription factor HES-1 (290 aa).

The disordered stretch occupies residues 1-47; the sequence is MPADTGMEKPTASPIAGAPASASHTPDKPRSASEHRKSSKPIMEKRR. A compositionally biased stretch (low complexity) spans 10 to 23; that stretch reads PTASPIAGAPASAS. Residues 25–36 are compositionally biased toward basic and acidic residues; it reads TPDKPRSASEHR. Residues 35-92 enclose the bHLH domain; the sequence is HRKSSKPIMEKRRRARINESLGQLKMLILDALKKDSSRHSKLEKADILEMTVKHLRNL. One can recognise an Orange domain in the interval 111–144; sequence YRAGFNECMNEVTRFLSTCEGVNADVRARLLGHL. The WRPW motif motif lies at 287–290; that stretch reads WRPW.

As to quaternary structure, transcription repression requires formation of a complex with a corepressor protein of the Groucho/TLE family.

The protein resides in the nucleus. Functionally, transcriptional repressor of genes that require a bHLH protein for their transcription. May act as a negative regulator of myogenesis by inhibiting the functions of MYOD1 and ASH1. The polypeptide is Transcription factor HES-1 (HES1) (Gallus gallus (Chicken)).